We begin with the raw amino-acid sequence, 353 residues long: Membrane lipoprotein TmpC (353 aa).

The N-terminal stretch at 1–20 (MREKWVRAFAGVFCAMLLIG) is a signal peptide. Cys-21 is lipidated: N-palmitoyl cysteine. Cys-21 is lipidated: S-diacylglycerol cysteine. Asp-47 provides a ligand contact to guanosine. Asp-47 is an inosine binding site. Adenosine contacts are provided by residues 47–48 (DS) and Phe-56. Guanosine-binding residues include Asn-57, Asp-128, Phe-206, Gly-232, Asp-258, and Lys-280. Positions 57 and 128 each coordinate inosine. The adenosine site is built by Asp-128, Phe-206, Gly-232, Asp-258, and Lys-280. Positions 232, 258, and 280 each coordinate inosine.

Belongs to the BMP lipoprotein family. In terms of assembly, monomer.

It is found in the cell membrane. Binds purine nucleosides and may play a role in purine nucleoside uptake. May be part of an ABC-type nucleoside uptake system. Has highest affinity for guanosine, followed by inosine and adenosine. Has very low affinity for cytidine and does not bind thymidine. The protein is Membrane lipoprotein TmpC (tmpC) of Treponema pallidum (strain Nichols).